Reading from the N-terminus, the 516-residue chain is Probable serine/threonine-protein kinase ECU02_0550 (516 aa).

A Protein kinase domain is found at 4 to 230; that stretch reads YKLRQVIGEG…ASEALMHRSF (227 aa). ATP contacts are provided by residues 10–18 and Lys-32; that span reads IGEGASSTV. Catalysis depends on Asp-120, which acts as the Proton acceptor.

The protein belongs to the protein kinase superfamily. CAMK Ser/Thr protein kinase family.

It carries out the reaction L-seryl-[protein] + ATP = O-phospho-L-seryl-[protein] + ADP + H(+). It catalyses the reaction L-threonyl-[protein] + ATP = O-phospho-L-threonyl-[protein] + ADP + H(+). The polypeptide is Probable serine/threonine-protein kinase ECU02_0550 (Encephalitozoon cuniculi (strain GB-M1) (Microsporidian parasite)).